A 224-amino-acid chain; its full sequence is uncharacterized protein (224 aa).

Residues Gln-108–Glu-137 are a coiled coil.

This is an uncharacterized protein from Human picobirnavirus (strain Human/Thailand/Hy005102/-) (PBV).